A 294-amino-acid chain; its full sequence is 33 kDa chaperonin (294 aa).

Cystine bridges form between C235–C237 and C268–C271.

This sequence belongs to the HSP33 family. Under oxidizing conditions two disulfide bonds are formed involving the reactive cysteines. Under reducing conditions zinc is bound to the reactive cysteines and the protein is inactive.

It is found in the cytoplasm. In terms of biological role, redox regulated molecular chaperone. Protects both thermally unfolding and oxidatively damaged proteins from irreversible aggregation. Plays an important role in the bacterial defense system toward oxidative stress. This is 33 kDa chaperonin from Proteus mirabilis (strain HI4320).